We begin with the raw amino-acid sequence, 358 residues long: Ribosomal RNA large subunit methyltransferase M (358 aa).

Residues S187, 220–223 (CPGG), D239, D259, and D276 each bind S-adenosyl-L-methionine. K305 functions as the Proton acceptor in the catalytic mechanism.

The protein belongs to the class I-like SAM-binding methyltransferase superfamily. RNA methyltransferase RlmE family. RlmM subfamily. As to quaternary structure, monomer.

The protein localises to the cytoplasm. It carries out the reaction cytidine(2498) in 23S rRNA + S-adenosyl-L-methionine = 2'-O-methylcytidine(2498) in 23S rRNA + S-adenosyl-L-homocysteine + H(+). Its function is as follows. Catalyzes the 2'-O-methylation at nucleotide C2498 in 23S rRNA. This chain is Ribosomal RNA large subunit methyltransferase M, found in Shewanella woodyi (strain ATCC 51908 / MS32).